Consider the following 346-residue polypeptide: Protein RecA (346 aa).

67–74 contacts ATP; that stretch reads GPESSGKT.

Belongs to the RecA family.

Its subcellular location is the cytoplasm. Can catalyze the hydrolysis of ATP in the presence of single-stranded DNA, the ATP-dependent uptake of single-stranded DNA by duplex DNA, and the ATP-dependent hybridization of homologous single-stranded DNAs. It interacts with LexA causing its activation and leading to its autocatalytic cleavage. The protein is Protein RecA of Mycobacterium ulcerans (strain Agy99).